The primary structure comprises 613 residues: DBH-like monooxygenase protein 1 (613 aa).

An N-terminal signal peptide occupies residues 1–19; sequence MCGWPLLVLWALLPATAAG. The Lumenal portion of the chain corresponds to 20–587; the sequence is SPGRSYPHRV…PLVCEKAASP (568 aa). Residues 35–148 form the DOMON domain; that stretch reads GKYWLHWGRQ…STVRVIWAYH (114 aa). N114 carries N-linked (GlcNAc...) asparagine glycosylation. Y203 is a catalytic residue. Cystine bridges form between C205-C257 and C242-C269. Cu cation-binding residues include H235 and H236. N-linked (GlcNAc...) asparagine glycosylation is present at N247. 4 residues coordinate Cu cation: H307, H389, H391, and M464. Disulfide bonds link C364/C480, C368/C550, and C443/C465. H389 is an active-site residue. N-linked (GlcNAc...) asparagine glycans are attached at residues N476 and N517. Residues 588 to 608 traverse the membrane as a helical segment; sequence PLHGIFSLRLLTCALLLGSML.

It belongs to the copper type II ascorbate-dependent monooxygenase family. Cu(2+) serves as cofactor. In terms of processing, N-glycosylated. In terms of tissue distribution, broadly exprressed, with highest levels in salivary gland and ovary.

The protein localises to the endoplasmic reticulum membrane. The sequence is that of DBH-like monooxygenase protein 1 (Moxd1) from Mus musculus (Mouse).